Consider the following 142-residue polypeptide: Hemoglobin subunit alpha-A (142 aa).

The region spanning 2-142 (VLSAADKGNV…VATVLTAKYR (141 aa)) is the Globin domain. Position 59 (His-59) interacts with O2. His-88 lines the heme b pocket.

It belongs to the globin family. As to quaternary structure, heterotetramer of two alpha chains and two beta chains. As to expression, red blood cells.

Its function is as follows. Involved in oxygen transport from the lung to the various peripheral tissues. This is Hemoglobin subunit alpha-A (HBAA) from Anseranas semipalmata (Magpie goose).